A 233-amino-acid chain; its full sequence is Large ribosomal subunit protein uL1 (233 aa).

The protein belongs to the universal ribosomal protein uL1 family. In terms of assembly, part of the 50S ribosomal subunit.

Its function is as follows. Binds directly to 23S rRNA. The L1 stalk is quite mobile in the ribosome, and is involved in E site tRNA release. Protein L1 is also a translational repressor protein, it controls the translation of the L11 operon by binding to its mRNA. The sequence is that of Large ribosomal subunit protein uL1 from Geobacillus thermodenitrificans (strain NG80-2).